A 195-amino-acid chain; its full sequence is Imidazoleglycerol-phosphate dehydratase (195 aa).

Belongs to the imidazoleglycerol-phosphate dehydratase family.

Its subcellular location is the cytoplasm. It carries out the reaction D-erythro-1-(imidazol-4-yl)glycerol 3-phosphate = 3-(imidazol-4-yl)-2-oxopropyl phosphate + H2O. It participates in amino-acid biosynthesis; L-histidine biosynthesis; L-histidine from 5-phospho-alpha-D-ribose 1-diphosphate: step 6/9. This chain is Imidazoleglycerol-phosphate dehydratase, found in Burkholderia pseudomallei (strain 1710b).